The following is a 287-amino-acid chain: ATP synthase gamma chain (287 aa).

It belongs to the ATPase gamma chain family. In terms of assembly, F-type ATPases have 2 components, CF(1) - the catalytic core - and CF(0) - the membrane proton channel. CF(1) has five subunits: alpha(3), beta(3), gamma(1), delta(1), epsilon(1). CF(0) has three main subunits: a, b and c.

It localises to the cell inner membrane. Functionally, produces ATP from ADP in the presence of a proton gradient across the membrane. The gamma chain is believed to be important in regulating ATPase activity and the flow of protons through the CF(0) complex. This chain is ATP synthase gamma chain, found in Salmonella paratyphi A (strain ATCC 9150 / SARB42).